We begin with the raw amino-acid sequence, 1388 residues long: DNA-directed RNA polymerase subunit beta (1388 aa).

The protein belongs to the RNA polymerase beta chain family. In terms of assembly, the RNAP catalytic core consists of 2 alpha, 1 beta, 1 beta' and 1 omega subunit. When a sigma factor is associated with the core the holoenzyme is formed, which can initiate transcription.

The catalysed reaction is RNA(n) + a ribonucleoside 5'-triphosphate = RNA(n+1) + diphosphate. Functionally, DNA-dependent RNA polymerase catalyzes the transcription of DNA into RNA using the four ribonucleoside triphosphates as substrates. This chain is DNA-directed RNA polymerase subunit beta, found in Stenotrophomonas maltophilia (strain K279a).